Reading from the N-terminus, the 400-residue chain is MKLEVFVPRAAHGDKMGSDLEGAGSSDVPSPLSAAGDDSLGSDGDCAANSPAAGSGAGDLEGGGGERNSSGGPSAQDGPEATDDSRTQASAAGPCAGGVGGGEGARSKPYTRRPKPPYSYIALIAMAIRDSAGGRLTLAEINEYLMGKFPFFRGSYTGWRNSVRHNLSLNDCFVKVLRDPSRPWGKDNYWMLNPNSEYTFADGVFRRRRKRLSHRTTVSASGLRPEEAPPGPAGTPQPAPAARSSPIARSPARQEERSSPASKFSSSFAIDSILSKPFRSRRDGDSALGVQLPWGAAPCPPLRAYPALLPAAPGGALLPLCAYGASEPTLLASRGTEVQPAAPLLLAPLSTAAPAKPFRGPETAGAAHLYCPLRLPTALQAAAACGPGPHLSYPVETLLA.

The segment at 1 to 112 is disordered; that stretch reads MKLEVFVPRA…EGARSKPYTR (112 aa). Positions 32-54 are enriched in low complexity; it reads LSAAGDDSLGSDGDCAANSPAAG. 2 stretches are compositionally biased toward gly residues: residues 55-66 and 95-104; these read SGAGDLEGGGGE and CAGGVGGGEG. A DNA-binding region (fork-head) is located at residues 115–210; it reads KPPYSYIALI…ADGVFRRRRK (96 aa). A disordered region spans residues 213-264; that stretch reads SHRTTVSASGLRPEEAPPGPAGTPQPAPAARSSPIARSPARQEERSSPASKF. Pro residues predominate over residues 228–239; sequence APPGPAGTPQPA. Residues 240 to 251 are compositionally biased toward low complexity; the sequence is PAARSSPIARSP.

In terms of tissue distribution, expressed in kidney and stomach. Expression in the outer medulla of the kidney and the transitional epithelium. Expressed in the hair follicle medulla.

It localises to the nucleus. In terms of biological role, plays a role in hair follicle differentiation. The chain is Forkhead box protein Q1 (Foxq1) from Mus musculus (Mouse).